The chain runs to 115 residues: Thrombospondin type-1 domain-containing protein 8 (115 aa).

The signal sequence occupies residues 1–21 (MARTPGALLLAPLLLLQLATP). The TSP type-1 domain maps to 53 to 104 (DSILGPWGKWRCLCDLGKQERSREVVGTAPGPVFMDPEKLIQLRPCRQRDCP).

This is Thrombospondin type-1 domain-containing protein 8 from Homo sapiens (Human).